We begin with the raw amino-acid sequence, 340 residues long: Ribose-phosphate pyrophosphokinase (340 aa).

ATP contacts are provided by residues 47–49 (NGE) and 106–107 (RQ). Mg(2+)-binding residues include H140 and D182. K206 is a catalytic residue. D-ribose 5-phosphate contacts are provided by residues R208, D234, and 238-242 (DTAGT).

Belongs to the ribose-phosphate pyrophosphokinase family. Class I subfamily. Homohexamer. Mg(2+) is required as a cofactor.

It is found in the cytoplasm. The catalysed reaction is D-ribose 5-phosphate + ATP = 5-phospho-alpha-D-ribose 1-diphosphate + AMP + H(+). It functions in the pathway metabolic intermediate biosynthesis; 5-phospho-alpha-D-ribose 1-diphosphate biosynthesis; 5-phospho-alpha-D-ribose 1-diphosphate from D-ribose 5-phosphate (route I): step 1/1. Involved in the biosynthesis of the central metabolite phospho-alpha-D-ribosyl-1-pyrophosphate (PRPP) via the transfer of pyrophosphoryl group from ATP to 1-hydroxyl of ribose-5-phosphate (Rib-5-P). This Bifidobacterium longum (strain NCC 2705) protein is Ribose-phosphate pyrophosphokinase.